We begin with the raw amino-acid sequence, 333 residues long: Glycerol-3-phosphate dehydrogenase [NAD(P)+] (333 aa).

NADPH contacts are provided by serine 10, phenylalanine 11, arginine 31, and lysine 105. 3 residues coordinate sn-glycerol 3-phosphate: lysine 105, glycine 136, and serine 138. Residue alanine 140 coordinates NADPH. Positions 191, 244, 254, 255, and 256 each coordinate sn-glycerol 3-phosphate. The active-site Proton acceptor is lysine 191. Residue arginine 255 coordinates NADPH. Positions 279 and 281 each coordinate NADPH.

Belongs to the NAD-dependent glycerol-3-phosphate dehydrogenase family.

It is found in the cytoplasm. It carries out the reaction sn-glycerol 3-phosphate + NAD(+) = dihydroxyacetone phosphate + NADH + H(+). The enzyme catalyses sn-glycerol 3-phosphate + NADP(+) = dihydroxyacetone phosphate + NADPH + H(+). It participates in membrane lipid metabolism; glycerophospholipid metabolism. Functionally, catalyzes the reduction of the glycolytic intermediate dihydroxyacetone phosphate (DHAP) to sn-glycerol 3-phosphate (G3P), the key precursor for phospholipid synthesis. The chain is Glycerol-3-phosphate dehydrogenase [NAD(P)+] from Leptospira biflexa serovar Patoc (strain Patoc 1 / Ames).